A 146-amino-acid chain; its full sequence is Universal stress protein A homolog 2 (146 aa).

The protein belongs to the universal stress protein A family. As to quaternary structure, homodimer.

It is found in the cytoplasm. In terms of biological role, involved in stress response. The sequence is that of Universal stress protein A homolog 2 (uspA2) from Coxiella burnetii (strain RSA 493 / Nine Mile phase I).